Reading from the N-terminus, the 185-residue chain is Orotate phosphoribosyltransferase (185 aa).

Residues Arg98, Lys99, Lys102, His104, and 128–136 each bind 5-phospho-alpha-D-ribose 1-diphosphate; that span reads EDVTTTGGS. The orotate site is built by Thr132 and Arg160.

Belongs to the purine/pyrimidine phosphoribosyltransferase family. PyrE subfamily. Homodimer. It depends on Mg(2+) as a cofactor.

It catalyses the reaction orotidine 5'-phosphate + diphosphate = orotate + 5-phospho-alpha-D-ribose 1-diphosphate. The protein operates within pyrimidine metabolism; UMP biosynthesis via de novo pathway; UMP from orotate: step 1/2. Catalyzes the transfer of a ribosyl phosphate group from 5-phosphoribose 1-diphosphate to orotate, leading to the formation of orotidine monophosphate (OMP). This chain is Orotate phosphoribosyltransferase, found in Bradyrhizobium sp. (strain BTAi1 / ATCC BAA-1182).